Reading from the N-terminus, the 216-residue chain is Redox-sensing transcriptional repressor Rex (216 aa).

The H-T-H motif DNA-binding region spans 16 to 55 (VYYRYLNVLLNANKHRVSSTELSEAVQVDSATIRRDFSYF). NAD(+) is bound at residue 90–95 (GVGSLG).

The protein belongs to the transcriptional regulatory Rex family. Homodimer.

It localises to the cytoplasm. Modulates transcription in response to changes in cellular NADH/NAD(+) redox state. The sequence is that of Redox-sensing transcriptional repressor Rex from Limosilactobacillus fermentum (strain NBRC 3956 / LMG 18251) (Lactobacillus fermentum).